Here is a 726-residue protein sequence, read N- to C-terminus: Dipeptidyl-peptidase 5 (726 aa).

An N-terminal signal peptide occupies residues 1-19 (MAPAKWLIASLAFASTGLA). Residues Asn-96 and Asn-252 are each glycosylated (N-linked (GlcNAc...) asparagine). The segment at 268 to 292 (VAEPINKRNGPRTPHGIEGASSSPV) is disordered. Residue Asn-485 is glycosylated (N-linked (GlcNAc...) asparagine). The active-site Charge relay system is Ser-558. The N-linked (GlcNAc...) asparagine glycan is linked to Asn-605. Residues Asp-641 and His-673 each act as charge relay system in the active site. N-linked (GlcNAc...) asparagine glycosylation occurs at Asn-699.

This sequence belongs to the peptidase S9C family.

It is found in the secreted. Functionally, extracellular dipeptidyl-peptidase which removes N-terminal dipeptides sequentially from polypeptides having unsubstituted N-termini. Contributes to pathogenicity. The sequence is that of Dipeptidyl-peptidase 5 (DPP5) from Arthroderma otae (Microsporum canis).